A 290-amino-acid polypeptide reads, in one-letter code: UPF0761 membrane protein Ent638_4092 (290 aa).

6 helical membrane-spanning segments follow: residues 44–64 (LLSLVPLVAVIFALFAAFPMF), 104–124 (VGACGLIVTALLLMYAIDSAL), 140–160 (FAVYWMILTLGPLLAGASLAI), 183–203 (IFPLILSWLAFWLLYSIVPTL), 210–230 (AIVGALVAAILFELGKKGFAL), and 244–264 (VLAVVPILFVWVYWTWCIVLL).

Belongs to the UPF0761 family.

The protein resides in the cell inner membrane. The chain is UPF0761 membrane protein Ent638_4092 from Enterobacter sp. (strain 638).